A 630-amino-acid chain; its full sequence is MFAARFDPTKVTENVLTAEVTQIKEPTVPQKRKRDAETDDEGSGEDDASSSEDDASSSEDDSDTISEQDENKVASVAPTETSQQSVDAKHSSVLNRFQQTLSLQGALSASDKVSSDNDVHDEDVSMKDVHSLTPIPQPAKVTNEALKLLDPSTYKSTAWDAATKIHYDSKMVKQFDSYEGELDARLLKNITSNFSSETFPIQTILFDKVLPLLNSSFKANRKLFTRRVGDILVNASTGSGKTLAYSVPLVQILRSRTVNKVRAIILVPTKILIHQVYDCLSKLSQGTSLNVSMSKLENSLKEEHNKFLYNSPDILIITPGRLVDHLQMESFDLKTLKFLVLDEADRLLNQSFQNWNQVLFHHLTNDKQDKRPGNVIKMVFSATLTTNAEKLYNLYLHNPKIFLTDSVKLYSIPKKLQELNVNIPTAKSLFKPLLLLRIIHDIKSSASRNAKILVFVKSNEASIRLESLLHAMLGSGIIEDEYNMFLSSIHSNISKGSSRKLIQEFASSEQKKSVLISTDIMARGIDINEITHVINYDLPISSQQYVHRCGRTARANTEGIAINLLVGKGEQKFWSQHIDTDLSRDIDGYQPSAYLDEEKLSELFSIEDTLKDTYKGCIKQLQTSKEADSK.

Residues 1–91 (MFAARFDPTK…SQQSVDAKHS (91 aa)) form a disordered region. Acidic residues predominate over residues 37–68 (ETDDEGSGEDDASSSEDDASSSEDDSDTISEQ). The span at 78 to 91 (PTETSQQSVDAKHS) shows a compositional bias: polar residues. A Q motif motif is present at residues 198–206 (TFPIQTILF). Residues 222 to 402 (KLFTRRVGDI…NLYLHNPKIF (181 aa)) form the Helicase ATP-binding domain. Residue 235–242 (ASTGSGKT) participates in ATP binding. Residues 342–345 (DEAD) carry the DEAD box motif. Residues 434–601 (LLLRIIHDIK…SAYLDEEKLS (168 aa)) enclose the Helicase C-terminal domain.

This sequence belongs to the DEAD box helicase family. DDX51/DBP6 subfamily. Associated with pre-ribosomal particles.

It is found in the nucleus. Its subcellular location is the nucleolus. The enzyme catalyses ATP + H2O = ADP + phosphate + H(+). ATP-binding RNA helicase involved in the biogenesis of 60S ribosomal subunits and is required for the normal formation of 25S and 5.8S rRNAs. This is ATP-dependent RNA helicase DBP6 (DBP6) from Kluyveromyces lactis (strain ATCC 8585 / CBS 2359 / DSM 70799 / NBRC 1267 / NRRL Y-1140 / WM37) (Yeast).